The primary structure comprises 451 residues: Phosphoglucosamine mutase (451 aa).

The active-site Phosphoserine intermediate is the Ser-103. Residues Ser-103, Asp-243, Asp-245, and Asp-247 each contribute to the Mg(2+) site. A Phosphoserine modification is found at Ser-103.

The protein belongs to the phosphohexose mutase family. It depends on Mg(2+) as a cofactor. In terms of processing, activated by phosphorylation.

The enzyme catalyses alpha-D-glucosamine 1-phosphate = D-glucosamine 6-phosphate. Functionally, catalyzes the conversion of glucosamine-6-phosphate to glucosamine-1-phosphate. This chain is Phosphoglucosamine mutase, found in Lactiplantibacillus plantarum (strain ATCC BAA-793 / NCIMB 8826 / WCFS1) (Lactobacillus plantarum).